Consider the following 843-residue polypeptide: Protein P (843 aa).

The tract at residues 1–177 is terminal protein domain (TP); it reads MPLSYPHFRK…FCGSPYSWEQ (177 aa). Positions 178 to 346 are spacer; sequence ELQHGSTSLN…YCLSHIINLL (169 aa). Disordered stretches follow at residues 228 to 259 and 283 to 314; these read KQGQ…GVEP and EKAN…SVGS. Residues 239 to 249 show a composition bias toward basic residues; it reads RSGRLRSRVHT. The interval 347–690 is polymerase/reverse transcriptase domain (RT); it reads EDWGPCYEHG…YMNLYPVARQ (344 aa). One can recognise a Reverse transcriptase domain in the interval 357-600; the sequence is QHYIRTPRTP…YSLHFMGYVI (244 aa). Mg(2+) contacts are provided by Asp-429, Asp-551, and Asp-552.

Belongs to the hepadnaviridae P protein family.

The enzyme catalyses DNA(n) + a 2'-deoxyribonucleoside 5'-triphosphate = DNA(n+1) + diphosphate. It carries out the reaction Endonucleolytic cleavage to 5'-phosphomonoester.. With respect to regulation, activated by host HSP70 and HSP40 in vitro to be able to bind the epsilon loop of the pgRNA. Because deletion of the RNase H region renders the protein partly chaperone-independent, the chaperones may be needed indirectly to relieve occlusion of the RNA-binding site by this domain. Inhibited by several reverse-transcriptase inhibitors: Lamivudine, Adefovir and Entecavir. Multifunctional enzyme that converts the viral RNA genome into dsDNA in viral cytoplasmic capsids. This enzyme displays a DNA polymerase activity that can copy either DNA or RNA templates, and a ribonuclease H (RNase H) activity that cleaves the RNA strand of RNA-DNA heteroduplexes in a partially processive 3'- to 5'-endonucleasic mode. Neo-synthesized pregenomic RNA (pgRNA) are encapsidated together with the P protein, and reverse-transcribed inside the nucleocapsid. Initiation of reverse-transcription occurs first by binding the epsilon loop on the pgRNA genome, and is initiated by protein priming, thereby the 5'-end of (-)DNA is covalently linked to P protein. Partial (+)DNA is synthesized from the (-)DNA template and generates the relaxed circular DNA (RC-DNA) genome. After budding and infection, the RC-DNA migrates in the nucleus, and is converted into a plasmid-like covalently closed circular DNA (cccDNA). The activity of P protein does not seem to be necessary for cccDNA generation, and is presumably released from (+)DNA by host nuclear DNA repair machinery. The sequence is that of Protein P from Homo sapiens (Human).